We begin with the raw amino-acid sequence, 344 residues long: Dihydroorotase (344 aa).

Residues His13 and His15 each contribute to the Zn(2+) site. Residues 15–17 (HVR) and Asn41 contribute to the substrate site. The Zn(2+) site is built by Lys99, His136, and His174. An N6-carboxylysine modification is found at Lys99. His136 contacts substrate. Leu219 is a binding site for substrate. Asp247 contributes to the Zn(2+) binding site. Asp247 is an active-site residue. Substrate is bound by residues His251 and Ala263.

The protein belongs to the metallo-dependent hydrolases superfamily. DHOase family. Class II DHOase subfamily. In terms of assembly, homodimer. Requires Zn(2+) as cofactor.

It catalyses the reaction (S)-dihydroorotate + H2O = N-carbamoyl-L-aspartate + H(+). It participates in pyrimidine metabolism; UMP biosynthesis via de novo pathway; (S)-dihydroorotate from bicarbonate: step 3/3. Its function is as follows. Catalyzes the reversible cyclization of carbamoyl aspartate to dihydroorotate. The polypeptide is Dihydroorotase (Aromatoleum aromaticum (strain DSM 19018 / LMG 30748 / EbN1) (Azoarcus sp. (strain EbN1))).